Consider the following 420-residue polypeptide: Signal recognition particle receptor FtsY (420 aa).

A compositionally biased stretch (basic and acidic residues) spans 28-62 (DLDRAMGKVAPDNKKTRDAKAAADARLAAEAEEAK). Residues 28 to 118 (DLDRAMGKVA…PETPESVGSR (91 aa)) are disordered. The span at 63-104 (AATAAEPAKSAESAKAEPAPAAQAEPEPAAAPKPESQPASKP) shows a compositional bias: low complexity. GTP is bound by residues 227 to 234 (GVNGTGKT), 310 to 314 (DTAGR), and 372 to 375 (SKLD).

The protein belongs to the GTP-binding SRP family. FtsY subfamily. As to quaternary structure, part of the signal recognition particle protein translocation system, which is composed of SRP and FtsY.

The protein localises to the cell membrane. It is found in the cytoplasm. The catalysed reaction is GTP + H2O = GDP + phosphate + H(+). In terms of biological role, involved in targeting and insertion of nascent membrane proteins into the cytoplasmic membrane. Acts as a receptor for the complex formed by the signal recognition particle (SRP) and the ribosome-nascent chain (RNC). The polypeptide is Signal recognition particle receptor FtsY (Bifidobacterium longum (strain NCC 2705)).